A 652-amino-acid chain; its full sequence is RNA-binding E3 ubiquitin-protein ligase MEX3C (652 aa).

Disordered regions lie at residues 15 to 39 and 80 to 136; these read AAPA…ELEG and QARR…EDRP. The segment covering 18 to 33 has biased composition (pro residues); that stretch reads APLPQPPPLPPPPPAG. Residues 101–134 show a composition bias toward acidic residues; the sequence is AELELEVDEEEGEEAELDGELLEEEELEEAEEED. KH domains are found at residues 225–286 and 319–380; these read TTEC…KREI and QTTV…REEI. Disordered regions lie at residues 429 to 448 and 506 to 566; these read ARMM…SGST and FEPV…HVGL. Residues 430-448 are compositionally biased toward low complexity; it reads RMMSNYRNDSSSSLGSGST. Positions 519–537 are enriched in polar residues; the sequence is PSGNMKTQRRGSQPSTPRL. 2 positions are modified to phosphoserine: S530 and S538. Positions 544–555 are enriched in basic and acidic residues; the sequence is SIEHPLARRVRS. The RING-type zinc-finger motif lies at 601-641; sequence CVICFENEVIAALVPCGHNLFCMECANKICEKRTPSCPVCQ.

In terms of assembly, interacts with USP7, which antagonizes the ability to degrade mRNA. In terms of processing, phosphorylated.

It localises to the nucleus. The protein resides in the cytoplasm. It catalyses the reaction S-ubiquitinyl-[E2 ubiquitin-conjugating enzyme]-L-cysteine + [acceptor protein]-L-lysine = [E2 ubiquitin-conjugating enzyme]-L-cysteine + N(6)-ubiquitinyl-[acceptor protein]-L-lysine.. Its function is as follows. RNA-binding protein. May be involved in post-transcriptional regulatory mechanisms, modulating levels of some mRNAs by promoting their degradation in a way involving ubiquitin ligase activity. May act as suppressor of replication stress and chromosome missegregation. The polypeptide is RNA-binding E3 ubiquitin-protein ligase MEX3C (Mex3c) (Mus musculus (Mouse)).